A 136-amino-acid polypeptide reads, in one-letter code: Ribonuclease YqgF (136 aa).

Belongs to the YqgF nuclease family. In terms of assembly, monomer; also forms low amounts of dimers. Mn(2+) serves as cofactor.

It is found in the cytoplasm. In terms of biological role, has robust sequence-specific RNase activity, acting as a 5'-3' exo/endonuclease on ssRNA substrates with minimally 3 consecutive adenine bases. Has no detectable nuclease activity on dsRNA, dsDNA or Holliday junction DNA. This chain is Ribonuclease YqgF, found in Deinococcus radiodurans (strain ATCC 13939 / DSM 20539 / JCM 16871 / CCUG 27074 / LMG 4051 / NBRC 15346 / NCIMB 9279 / VKM B-1422 / R1).